Reading from the N-terminus, the 561-residue chain is Carboxylesterase patB (561 aa).

The first 19 residues, 1 to 19 (MQIINWASLLLVTWETVVA), serve as a signal peptide directing secretion. Residues Asn-38, Asn-69, and Asn-109 are each glycosylated (N-linked (GlcNAc...) asparagine). Residue Ser-263 is the Acyl-ester intermediate of the active site. Ser-263 contacts substrate. N-linked (GlcNAc...) asparagine glycosylation occurs at Asn-316. Glu-385 functions as the Charge relay system in the catalytic mechanism. 4 N-linked (GlcNAc...) asparagine glycosylation sites follow: Asn-393, Asn-412, Asn-429, and Asn-496.

It belongs to the type-B carboxylesterase/lipase family.

It localises to the cytoplasm. It is found in the cytosol. It carries out the reaction a carboxylic ester + H2O = an alcohol + a carboxylate + H(+). Its pathway is mycotoxin biosynthesis; patulin biosynthesis. In terms of biological role, carboxylesterase; part of the gene cluster that mediates the biosynthesis of patulin, an acetate-derived tetraketide mycotoxin produced by several fungal species that shows antimicrobial properties against several bacteria. The function of patB in patulin synthesis has still to be characterized. The pathway begins with the synthesis of 6-methylsalicylic acid by the polyketide synthase (PKS) patK via condensation of acetate and malonate units. The 6-methylsalicylic acid decarboxylase patG then catalyzes the decarboxylation of 6-methylsalicylic acid to yield m-cresol (also known as 3-methylphenol). These first reactions occur in the cytosol. The intermediate m-cresol is then transported into the endoplasmic reticulum where the cytochrome P450 monooxygenase patH converts it to m-hydroxybenzyl alcohol, which is further converted to gentisyl alcohol by the cytochrome P450 monooxygenase patI. The oxidoreductases patJ and patO further convert gentisyl alcohol to isoepoxydon in the vacuole. PatN catalyzes then the transformation of isoepoxydon into phyllostine. The cluster protein patF is responsible for the conversion from phyllostine to neopatulin whereas the alcohol dehydrogenase patD converts neopatulin to E-ascladiol. The steps between isoepoxydon and E-ascladiol occur in the cytosol, and E-ascladiol is probably secreted to the extracellular space by one of the cluster-specific transporters patC or patM. Finally, the secreted patulin synthase patE catalyzes the conversion of E-ascladiol to patulin. This chain is Carboxylesterase patB, found in Penicillium expansum (Blue mold rot fungus).